Reading from the N-terminus, the 430-residue chain is MLSFGGSLLSHSDIASRNKFSIDYSQFKAFFPGNWKFSNSKDKKPVRSPTLDEPVGDVDIDIFDVSKFYPLKRLSSIPEKIRANYHEELQTTSYDLVRNPFTHGLFCVVFYHQNKSYLKMGVTDNFNAFEEDSRVYQYGVNHKLSCKNLLLAINYSPKTYTKIFDFLRNGRAPLQVLVHHCMLYNFYPEDFQDALWCAVQAHVMNQVRLGRATLLHARACYQKIGDIRMYLIDPHDLYFSPNSLKWLIICSKQFQALVHLEVKMDTLKIFRRRSKYFNLARSCVSGFELSWLIMMTSIGSNASAVPVHAYLASKRILYPSIIPEEIFFMRKFDSSLFKDIKNIHELLGFLGRLFMDLQDCEKFHHDYTEYHCYRIGKPLYQNYEEEALRKKSQGVKDADFIKPLVTNTRTAEKYKAFFEYKRNIVLKKQS.

This sequence belongs to the UPF0300 family.

The protein resides in the mitochondrion. Functionally, has a role in meiosis. In Schizosaccharomyces pombe (strain 972 / ATCC 24843) (Fission yeast), this protein is Meiotically up-regulated gene 132 protein (mug132).